The sequence spans 140 residues: N14 matrix protein (140 aa).

Residues 1–25 (MACTLRLTIAALVLLGICHLSRPVA) form the signal peptide.

The protein belongs to the N16 matrix protein family. As to quaternary structure, heterooligomer; disulfide-linked. Pif97, Pif80, N16 and other proteins form a complex. In terms of tissue distribution, component of conchiolin, the organic matrix of nacre. Only expressed in the dorsal region of the mantle.

It is found in the secreted. The protein resides in the extracellular space. The protein localises to the extracellular matrix. May be specifically involved in the formation of the nacreous layer. This is N14 matrix protein from Pinctada maxima (Silver-lipped pearl oyster).